We begin with the raw amino-acid sequence, 396 residues long: Elongation factor Tu (396 aa).

The tr-type G domain maps to 10–206 (KPHCNIGTIG…AVDSYIPQPE (197 aa)). The G1 stretch occupies residues 19–26 (GHVDHGKT). GTP is bound at residue 19–26 (GHVDHGKT). Residue Thr-26 participates in Mg(2+) binding. A G2 region spans residues 60-64 (GITIS). The interval 81-84 (DCPG) is G3. GTP is bound by residues 81-85 (DCPGH) and 136-139 (NKCD). Residues 136-139 (NKCD) are G4. Residues 174-176 (SAL) are G5.

It belongs to the TRAFAC class translation factor GTPase superfamily. Classic translation factor GTPase family. EF-Tu/EF-1A subfamily. In terms of assembly, monomer.

It is found in the cytoplasm. It catalyses the reaction GTP + H2O = GDP + phosphate + H(+). Functionally, GTP hydrolase that promotes the GTP-dependent binding of aminoacyl-tRNA to the A-site of ribosomes during protein biosynthesis. This is Elongation factor Tu from Rhodopseudomonas palustris (strain BisA53).